Consider the following 642-residue polypeptide: tRNA uridine 5-carboxymethylaminomethyl modification enzyme MnmG (642 aa).

FAD is bound by residues 12–17 (GAGHAG), valine 124, and serine 179. 272–286 (GPRYCPSIEDKITRF) contributes to the NAD(+) binding site. Residue glutamine 369 coordinates FAD.

This sequence belongs to the MnmG family. Homodimer. Heterotetramer of two MnmE and two MnmG subunits. It depends on FAD as a cofactor.

The protein resides in the cytoplasm. NAD-binding protein involved in the addition of a carboxymethylaminomethyl (cmnm) group at the wobble position (U34) of certain tRNAs, forming tRNA-cmnm(5)s(2)U34. The sequence is that of tRNA uridine 5-carboxymethylaminomethyl modification enzyme MnmG from Bdellovibrio bacteriovorus (strain ATCC 15356 / DSM 50701 / NCIMB 9529 / HD100).